We begin with the raw amino-acid sequence, 85 residues long: Large ribosomal subunit protein bL27 (85 aa).

The segment at 1-20 (MATKKAGGSTKNGRDSNPKM) is disordered.

This sequence belongs to the bacterial ribosomal protein bL27 family.

The protein is Large ribosomal subunit protein bL27 of Acinetobacter baumannii (strain AB307-0294).